Consider the following 353-residue polypeptide: Chemerin-like receptor 2 (353 aa).

The Extracellular segment spans residues 1–41 (MEVSKEMLFEELDNYSYALDYYSQESDPEEKVYLGLVHWIS). The N-linked (GlcNAc...) asparagine glycan is linked to N14. A helical membrane pass occupies residues 42–62 (LFLYALAFVLGIPGNAIVIWL). Over 63–73 (MGFKWKKTVTT) the chain is Cytoplasmic. Residues 74–94 (LWFLNLAIADFIFVLFLPLYI) traverse the membrane as a helical segment. Over 95–112 (SYVALSFHWPFGLWLCKV) the chain is Extracellular. C110 and C187 are joined by a disulfide. The chain crosses the membrane as a helical span at residues 113-133 (NSFIAQLNMFSSVFFLTVISL). The Cytoplasmic segment spans residues 134–154 (DRYIHLLHPGLSHRHRTLKSS). Residues 155 to 175 (LVVVILVWLLASLLGGPTLYF) form a helical membrane-spanning segment. The Extracellular segment spans residues 176 to 210 (RDTMEVNNHIICYNNFQEHELTLMRHHVLTWVKFL). Residues 211-231 (FGYLFPLLTMSSCYLCLIFKM) traverse the membrane as a helical segment. The Cytoplasmic portion of the chain corresponds to 232 to 247 (KKRNILISRKHLWMIL). Residues 248–268 (SVVIAFLVCWTPYHLFSIWEL) form a helical membrane-spanning segment. The Extracellular portion of the chain corresponds to 269-286 (SIHHNSSFQNVLQGGIPL). The helical transmembrane segment at 287–307 (STGLAFLNSCLNPILYVLISK) threads the bilayer. At 308–353 (TFQARFRASVAEVLKRSLWEASCSGTVSEQLRSAETKSLSLLETAQ) the chain is on the cytoplasmic side.

Belongs to the chemokine-like receptor (CMKLR) family. As to expression, high expressed in white adipose tissue and skeletal muscle. Expressed in hippocampus and cortex.

The protein resides in the cell membrane. Functionally, receptor for chemoattractant adipokine chemerin/RARRES2 suggesting a role for this receptor in the regulation of inflammation and energy homesotasis. Signals mainly via beta-arrestin pathway. Binding of RARRES2 activates weakly G proteins, calcium mobilization and MAPK1/MAPK3 (ERK1/2) phosphorylation too. Acts also as a receptor for TAFA1, mediates its effects on neuronal stem-cell proliferation and differentiation via the activation of ROCK/ERK and ROCK/STAT3 signaling pathway. The sequence is that of Chemerin-like receptor 2 (Cmklr2) from Mus musculus (Mouse).